The primary structure comprises 209 residues: Orotate phosphoribosyltransferase (209 aa).

Residues Arg96, Lys100, His102, and 122-130 (EDLISTGGS) contribute to the 5-phospho-alpha-D-ribose 1-diphosphate site. Ser126 contacts orotate.

The protein belongs to the purine/pyrimidine phosphoribosyltransferase family. PyrE subfamily. Homodimer. Requires Mg(2+) as cofactor.

It catalyses the reaction orotidine 5'-phosphate + diphosphate = orotate + 5-phospho-alpha-D-ribose 1-diphosphate. It functions in the pathway pyrimidine metabolism; UMP biosynthesis via de novo pathway; UMP from orotate: step 1/2. Its function is as follows. Catalyzes the transfer of a ribosyl phosphate group from 5-phosphoribose 1-diphosphate to orotate, leading to the formation of orotidine monophosphate (OMP). The sequence is that of Orotate phosphoribosyltransferase from Streptococcus thermophilus (strain CNRZ 1066).